The primary structure comprises 571 residues: MFCEKPTEKREKSPCRCKNCVLRHSDFLPWPEPIGFTSDRKTDKDNNNHISTLQSVESVVTISDVNERHTTNHYKNHQSNPDEIAYTPNRSGVSSPVNDGASSPTQRGGTTPAPQGGKGGNSPSRVTAQPQAQPTILLIVVNKNDPPPYGQGQSWEYPGQQYSVPGPRGYPGPGPRGYPGPGPRGYPGRGPRGYPGPGPRGYPGQGPRRYSCPGPRGYPGPGSSGRPDPGGGLQGYYYPPSGPGNGTGPSGRPRPQNENEYAYYDRRRYSEAYQNNRNDWRGQPRGYYDGAYAEEHNLNRQPETRRNCQCPEKQQTPPPEETQNAQENDDQQTTKRKSFKRLVGMGVGNTCSCQGPSLMGSNLRSLGNEMDNQEVGRSGNMGTPPNTMEYLSERGSPPEIREVTVTDAKNKTYKCIQVPICISTGKANTCRCCKCAPSPDAENDESFDEDAECICNHEGKCTCVAGNEFPTEFGCECDLTNLEQTLRELIPNAECICYLKKKKRRRKRKKWAPKVYYDRFAGPPFVLNPKPRCLDYGRSPFCNPCYNPCSCAPFAKSCYTCDYNCEGCGRF.

Disordered regions lie at residues 71-128, 142-258, and 298-336; these read TNHY…RVTA, NKND…PQNE, and LNRQ…TTKR. Positions 88–113 are enriched in polar residues; the sequence is PNRSGVSSPVNDGASSPTQRGGTTPA. Over residues 168-184 the composition is skewed to pro residues; the sequence is RGYPGPGPRGYPGPGPR. The segment covering 205-215 has biased composition (low complexity); the sequence is QGPRRYSCPGP. The span at 217–234 shows a compositional bias: gly residues; sequence GYPGPGSSGRPDPGGGLQ. Low complexity predominate over residues 311-326; the sequence is PEKQQTPPPEETQNAQ.

This is an uncharacterized protein from Drosophila melanogaster (Fruit fly).